The primary structure comprises 647 residues: LIM domain kinase 1 (647 aa).

LIM zinc-binding domains are found at residues 25–75 (CASC…CKKD) and 84–137 (CHGC…CGHC). Residues 165 to 258 (LVSIPASSHG…LLQLTLEHDP (94 aa)) form the PDZ domain. At serine 210 the chain carries Phosphoserine. Threonine 229 carries the phosphothreonine modification. Positions 260–319 (DTLGHGLGPETSPLSSPAYTPSGEAGSSARQKPVLRSCSIDRSPGAGSLGSPASQRKDLG) are disordered. A phosphoserine mark is found at serine 298, serine 302, serine 307, and serine 310. Residues 302–313 (SPGAGSLGSPAS) show a composition bias toward low complexity. Serine 323 is modified (phosphoserine; by MAPKAPK2). Serine 337 carries the post-translational modification Phosphoserine. One can recognise a Protein kinase domain in the interval 339-604 (LIHGEVLGKG…PSFVKLEHWL (266 aa)). ATP contacts are provided by residues 345–353 (LGKGCFGQA) and lysine 368. Residue aspartate 460 is part of the active site. Position 508 is a phosphothreonine; by ROCK1 and PAK1 (threonine 508).

It belongs to the protein kinase superfamily. TKL Ser/Thr protein kinase family. Interacts (via LIM domain) with the cytoplasmic domain of NRG1. Interacts with NISCH. Interacts with RLIM and RNF6. Self-associates to form homodimers. Interacts with HSP90AA1; this interaction promotes LIMK1 dimerization and subsequent transphosphorylation. Interacts with CDKN1C. Interacts with SSH1. Interacts with ROCK1. Interacts (via LIM zinc-binding domains) with FAM89B/LRAP25 (via LRR repeat). Forms a tripartite complex with CDC42BPA, CDC42BPB and FAM89B/LRAP25. Autophosphorylated. Phosphorylated on Thr-508 by ROCK1 and PAK1, resulting in activation. Phosphorylated by PAK4 which increases the ability of LIMK1 to phosphorylate cofilin. Phosphorylated at Ser-323 by MAPKAPK2 during activation of VEGFA-induced signaling, which results in activation of LIMK1 and promotion of actin reorganization, cell migration, and tubule formation of endothelial cells. Dephosphorylated and inactivated by SSH1. Phosphorylated by CDC42BP. In terms of processing, ubiquitinated. 'Lys-48'-linked polyubiquitination by RNF6 leads to proteasomal degradation through the 26S proteasome, modulating LIMK1 levels in the growth cone and its effect on axonal outgrowth. Also polyubiquitinated by RLIM. As to expression, highest expression in both adult and fetal nervous system. Detected ubiquitously throughout the different regions of adult brain, with highest levels in the cerebral cortex. Expressed to a lesser extent in heart and skeletal muscle.

The protein resides in the cytoplasm. Its subcellular location is the nucleus. It is found in the cytoskeleton. The protein localises to the cell projection. It localises to the lamellipodium. It catalyses the reaction L-seryl-[protein] + ATP = O-phospho-L-seryl-[protein] + ADP + H(+). The enzyme catalyses L-threonyl-[protein] + ATP = O-phospho-L-threonyl-[protein] + ADP + H(+). In terms of biological role, serine/threonine-protein kinase that plays an essential role in the regulation of actin filament dynamics. Acts downstream of several Rho family GTPase signal transduction pathways. Activated by upstream kinases including ROCK1, PAK1 and PAK4, which phosphorylate LIMK1 on a threonine residue located in its activation loop. LIMK1 subsequently phosphorylates and inactivates the actin binding/depolymerizing factors cofilin-1/CFL1, cofilin-2/CFL2 and destrin/DSTN, thereby preventing the cleavage of filamentous actin (F-actin), and stabilizing the actin cytoskeleton. In this way LIMK1 regulates several actin-dependent biological processes including cell motility, cell cycle progression, and differentiation. Phosphorylates TPPP on serine residues, thereby promoting microtubule disassembly. Stimulates axonal outgrowth and may be involved in brain development. Functionally, has a dominant negative effect on actin cytoskeletal changes. Required for atypical chemokine receptor ACKR2-induced phosphorylation of cofilin (CFL1). The chain is LIM domain kinase 1 (LIMK1) from Homo sapiens (Human).